We begin with the raw amino-acid sequence, 409 residues long: uncharacterized protein (409 aa).

The next 4 membrane-spanning stretches (helical) occupy residues Ile-20–Leu-40, Phe-283–Met-303, Ile-344–Phe-364, and Ile-372–Leu-392.

The protein belongs to the ABC-4 integral membrane protein family.

It is found in the cell membrane. This is an uncharacterized protein from Bacillus subtilis (strain 168).